The chain runs to 81 residues: Small ribosomal subunit protein bS18 (81 aa).

It belongs to the bacterial ribosomal protein bS18 family. As to quaternary structure, part of the 30S ribosomal subunit. Forms a tight heterodimer with protein bS6.

Its function is as follows. Binds as a heterodimer with protein bS6 to the central domain of the 16S rRNA, where it helps stabilize the platform of the 30S subunit. This Chloroflexus aurantiacus (strain ATCC 29366 / DSM 635 / J-10-fl) protein is Small ribosomal subunit protein bS18.